Here is a 2045-residue protein sequence, read N- to C-terminus: Host cell factor 1 (2045 aa).

An N-acetylalanine modification is found at A2. The residue at position 6 (S6) is a Phosphoserine. Kelch repeat units lie at residues 44–89 (LIVV…GFVC), 93–140 (RLLV…RLGH), 148–194 (KCYL…ITYG), 217–265 (KLVI…TIGN), and 266–313 (KMYV…LMDT). Residues K105, K163, and K244 each participate in a glycyl lysine isopeptide (Lys-Gly) (interchain with G-Cter in ubiquitin) cross-link. K282 is covalently cross-linked (Glycyl lysine isopeptide (Lys-Gly) (interchain with G-Cter in SUMO2)). The residue at position 288 (K288) is an N6-acetyllysine. K363 participates in a covalent cross-link: Glycyl lysine isopeptide (Lys-Gly) (interchain with G-Cter in ubiquitin). One can recognise a Fibronectin type-III 1 domain in the interval 366–457 (PPARVQLVRA…VPQAATAPPS (92 aa)). The interval 407 to 434 (ATATSPTPNPVPSVPANPPKSPAPAAAA) is disordered. S411 carries the post-translational modification Phosphoserine. A compositionally biased stretch (pro residues) spans 413–428 (TPNPVPSVPANPPKSP). The required for interaction with OGT stretch occupies residues 500–550 (LVTMRPASQAGKAPVTVTSLPASVRMVVPTQSAQGTVIGSNPQMSGMAALA). An omega-N-methylarginine mark is found at R504 and R524. Phosphoserine is present on residues S598, S666, and S669. The segment at 610–722 (LKTAAAQVGT…KGPLPAGTIL (113 aa)) is interaction with SIN3A. The segment at 750–902 (ILGISSVSPS…SLAGAGAHST (153 aa)) is interaction with ZBTB17. At K813 the chain carries N6-acetyllysine. Positions 813–912 (KIITAVPKIA…SASLATPITT (100 aa)) are interaction with GABP2. HCF repeat repeat units lie at residues 1010 to 1035 (TLVC…TVVA), 1072 to 1097 (VRVC…ATSN), and 1101 to 1126 (QHGC…AMSS). The HCF repeat 4; degenerate repeat unit spans residues 1157 to 1182 (VQGTVKPQCQTQQTNMTTTTMTVQAT). S1204 is subject to Phosphoserine. R1216 is modified (asymmetric dimethylarginine). 4 disordered regions span residues 1219–1242 (LSGP…YTTN), 1302–1375 (PCET…TSTG), 1444–1475 (TVTS…STNI), and 1494–1525 (TTVT…QLPP). A Phosphoserine modification is found at S1223. HCF repeat repeat units lie at residues 1295–1320 (TQVC…SNAG) and 1323–1348 (QRVC…ATSN). The span at 1308 to 1321 (TGTTNTATTSNAGS) shows a compositional bias: low complexity. Residues 1358-1383 (QQPASGHPCETHQTTSTGTTMSVSVG) form an HCF repeat 7; degenerate repeat. One copy of the HCF repeat 8 repeat lies at 1423-1448 (QRVCSNPPCETHETGTTHTATTVTSN). At T1500 the chain carries Phosphothreonine. Positions 1502–1511 (VPGPSVPPPE) are enriched in pro residues. Phosphoserine is present on residues S1506, S1516, and S1781. Fibronectin type-III domains are found at residues 1808–1898 (PPPP…TCLP) and 1900–2016 (FPGA…TSKD). Glycyl lysine isopeptide (Lys-Gly) (interchain with G-Cter in ubiquitin) cross-links involve residues K1817 and K1818. S1848 carries the phosphoserine modification. A disordered region spans residues 2004 to 2045 (ATQVRWLQETSKDSSGTKPASKRPMSSPEMKSAPKKSKADGQ). The residue at position 2015 (K2015) is an N6-acetyllysine. A Glycyl lysine isopeptide (Lys-Gly) (interchain with G-Cter in SUMO2) cross-link involves residue K2034.

As to quaternary structure, composed predominantly of six polypeptides ranging from 110 to 150 kDa and a minor 300 kDa polypeptide. The majority of N- and C-terminal cleavage products remain tightly, albeit non-covalently, associated. Interacts with POU2F1, CREB3, ZBTB17, EGR2, E2F4, CREBZF, SP1, GABP2, Sin3 HDAC complex (SIN3A, HDAC1, HDAC2, SUDS3), SAP30, SIN3B and FHL2. Component of a MLL1 complex, composed of at least the core components KMT2A/MLL1, ASH2L, HCFC1, WDR5 and RBBP5, as well as the facultative components BACC1, CHD8, DPY30, E2F6, HCFC2, HSP70, INO80C, KANSL1, LAS1L, MAX, MCRS1, MEN1, MGA, KAT8, PELP1, PHF20, PRP31, RING2, RUVBL1, RUVBL2, SENP3, TAF1, TAF4, TAF6, TAF7, TAF9 and TEX10. Component of a THAP1/THAP3-HCFC1-OGT complex that is required for the regulation of the transcriptional activity of RRM1. Interacts directly with THAP3 (via its HBM). Interacts (via the Kelch-repeat domain) with THAP1 (via the HBM); the interaction recruits HCHC1 to the RRM1. Interacts with THAP7 and THAP11 (via the HMB). Interacts directly with OGT; the interaction, which requires the HCFC1 cleavage site domain, glycosylates and promotes the proteolytic processing of HCFC1 and retains OGT in the nucleus. Component of the SET1 complex, at least composed of the catalytic subunit (SETD1A or SETD1B), WDR5, WDR82, RBBP5, ASH2L, CXXC1, HCFC1 and DPY30. Component of the NSL complex at least composed of MOF/KAT8, KANSL1, KANSL2, KANSL3, MCRS1, PHF20, OGT1/OGT, WDR5 and HCFC1. Component of a complex at least composed of ZNF335, HCFC1, CCAR2, EMSY, MKI67, RBBP5, ASH2L and WDR5; the complex is formed as a result of interactions between components of a nuclear receptor-mediated transcription complex and a histone methylation complex. Within the complex interacts with ZNF335. Interacts with TET2 and TET3. Interacts with HCFC1R1. Interacts with THAP11. Interacts (via Kelch domain) with KMT2E (via HBM motif). Interacts with E2F1. Accessory scaffold component of the polycomb repressive deubiquitinase (PR-DUB) complex, at least composed of BAP1, one of ASXL1, ASXL2 or (probably) ASXL3 and one of MBD5 or MBD6; the PR-DUB core associates with a number of accessory proteins, including FOXK1, FOXK2, KDM1B, HCFC1, YY1 and OGT. Interacts with YY1 (via Gly-rich region); the interaction is direct. Interacts with BAP1 (via HBM-like motif). Proteolytically cleaved at one or several PPCE--THET sites within the HCF repeats. Further cleavage of the primary N- and C-terminal chains results in a 'trimming' and accumulation of the smaller chains. Cleavage is promoted by O-glycosylation. In terms of processing, O-glycosylated. GlcNAcylation by OGT promotes proteolytic processing. Post-translationally, ubiquitinated. Lys-1817 and Lys-1818 are ubiquitinated both via 'Lys-48'- and 'Lys-63'-linked polyubiquitin chains. BAP1 mediated deubiquitination of 'Lys-48'-linked polyubiquitin chains; deubiquitination by BAP1 does not seem to stabilize the protein. In terms of tissue distribution, expressed in liver, pituitary gland, skeletal muscle, kidney, eye and brain (at protein level). Also observed at low level in heart, spleen and lung.

It is found in the nucleus. The protein resides in the cytoplasm. Functionally, transcriptional coregulator. Serves as a scaffold protein, bridging interactions between transcription factors, including THAP11 and ZNF143, and transcriptional coregulators. Involved in control of the cell cycle. Also antagonizes transactivation by ZBTB17 and GABP2; represses ZBTB17 activation of the p15(INK4b) promoter and inhibits its ability to recruit p300. Coactivator for EGR2 and GABP2. Tethers the chromatin modifying Set1/Ash2 histone H3 'Lys-4' methyltransferase (H3K4me) and Sin3 histone deacetylase (HDAC) complexes (involved in the activation and repression of transcription respectively) together. As part of the NSL complex it may be involved in acetylation of nucleosomal histone H4 on several lysine residues. Recruits KMT2E to E2F1 responsive promoters promoting transcriptional activation and thereby facilitates G1 to S phase transition. Modulates expression of homeobox protein PDX1, perhaps acting in concert with transcription factor E2F1, thereby regulating pancreatic beta-cell growth and glucose-stimulated insulin secretion. May negatively modulate transcriptional activity of FOXO3. The polypeptide is Host cell factor 1 (Mus musculus (Mouse)).